The sequence spans 519 residues: Galactan beta-1,4-galactosyltransferase GALS2 (519 aa).

Residues 28 to 48 form a helical membrane-spanning segment; the sequence is LALMALLVLCTLATLLPFLPS. A GT92 domain is found at 257 to 471; it reads DYLYCGSSLY…YHGSISQRRE (215 aa).

The protein belongs to the glycosyltransferase 92 family. Expressed in the midrib of mature leaves, root vasculature, flower filaments, siliques and seeds.

It localises to the golgi apparatus membrane. Its function is as follows. Involved in the biosynthesis of beta-1,4-galactan. Beta-1,4-galactans are abundant polysaccharides in plant cell walls and are found as side-chain of rhamnogalacturonan I, which is a major component of pectin. This chain is Galactan beta-1,4-galactosyltransferase GALS2, found in Arabidopsis thaliana (Mouse-ear cress).